The chain runs to 175 residues: Archaemetzincin (175 aa).

Residue His125 participates in Zn(2+) binding. Glu126 serves as the catalytic Proton acceptor. Zn(2+) contacts are provided by His129, His135, Cys136, Cys141, Cys160, and Cys163.

Belongs to the peptidase M54 family. Monomer. Requires Zn(2+) as cofactor.

Functionally, probable zinc metalloprotease whose natural substrate is unknown. Does not show endo- or exopeptidase activity against resorufin labeled casein, p-nitroanilide (pNA), amidomethylcoumarin (AMC) (one to three amino acids in length), and hippuryl-aminoacid substrates. The chain is Archaemetzincin from Methanopyrus kandleri (strain AV19 / DSM 6324 / JCM 9639 / NBRC 100938).